The sequence spans 181 residues: Ribose 1,5-bisphosphate phosphokinase PhnN (181 aa).

Glycine 12–aspartate 19 contributes to the ATP binding site.

Belongs to the ribose 1,5-bisphosphokinase family.

The catalysed reaction is alpha-D-ribose 1,5-bisphosphate + ATP = 5-phospho-alpha-D-ribose 1-diphosphate + ADP. It functions in the pathway metabolic intermediate biosynthesis; 5-phospho-alpha-D-ribose 1-diphosphate biosynthesis; 5-phospho-alpha-D-ribose 1-diphosphate from D-ribose 5-phosphate (route II): step 3/3. Functionally, catalyzes the phosphorylation of ribose 1,5-bisphosphate to 5-phospho-D-ribosyl alpha-1-diphosphate (PRPP). In Acidiphilium cryptum (strain JF-5), this protein is Ribose 1,5-bisphosphate phosphokinase PhnN.